We begin with the raw amino-acid sequence, 102 residues long: Large ribosomal subunit protein bL21 (102 aa).

The segment covering 77-88 (KPKKHTHTKQGH) has biased composition (basic residues). A disordered region spans residues 77-102 (KPKKHTHTKQGHRQPYTKVTINKINA). Residues 93-102 (TKVTINKINA) are compositionally biased toward polar residues.

This sequence belongs to the bacterial ribosomal protein bL21 family. In terms of assembly, part of the 50S ribosomal subunit. Contacts protein L20.

Its function is as follows. This protein binds to 23S rRNA in the presence of protein L20. The protein is Large ribosomal subunit protein bL21 of Limosilactobacillus reuteri (strain DSM 20016) (Lactobacillus reuteri).